The following is a 433-amino-acid chain: Glutamate-1-semialdehyde 2,1-aminomutase (433 aa).

The residue at position 270 (Lys270) is an N6-(pyridoxal phosphate)lysine.

This sequence belongs to the class-III pyridoxal-phosphate-dependent aminotransferase family. HemL subfamily. In terms of assembly, homodimer. Pyridoxal 5'-phosphate serves as cofactor.

The protein localises to the cytoplasm. The catalysed reaction is (S)-4-amino-5-oxopentanoate = 5-aminolevulinate. It functions in the pathway porphyrin-containing compound metabolism; protoporphyrin-IX biosynthesis; 5-aminolevulinate from L-glutamyl-tRNA(Glu): step 2/2. This chain is Glutamate-1-semialdehyde 2,1-aminomutase, found in Symbiobacterium thermophilum (strain DSM 24528 / JCM 14929 / IAM 14863 / T).